Here is a 343-residue protein sequence, read N- to C-terminus: Tetraacyldisaccharide 4'-kinase (343 aa).

V58–T65 provides a ligand contact to ATP.

Belongs to the LpxK family.

It catalyses the reaction a lipid A disaccharide + ATP = a lipid IVA + ADP + H(+). The protein operates within glycolipid biosynthesis; lipid IV(A) biosynthesis; lipid IV(A) from (3R)-3-hydroxytetradecanoyl-[acyl-carrier-protein] and UDP-N-acetyl-alpha-D-glucosamine: step 6/6. Its function is as follows. Transfers the gamma-phosphate of ATP to the 4'-position of a tetraacyldisaccharide 1-phosphate intermediate (termed DS-1-P) to form tetraacyldisaccharide 1,4'-bis-phosphate (lipid IVA). This chain is Tetraacyldisaccharide 4'-kinase, found in Polaromonas naphthalenivorans (strain CJ2).